Consider the following 393-residue polypeptide: Phospholipid-transporting ATPase accessory subunit CRF1 (393 aa).

At 1 to 46 (MGLILRWKEKKQLSSKQNAQKSRKPANTSFRQQRLKAWQPILSPQS) the chain is on the cytoplasmic side. Residues 47 to 67 (VLPLLILMACVFAPIGIGLVV) traverse the membrane as a helical segment. At 68-334 (STISVQRLVV…NSIIGAGNEA (267 aa)) the chain is on the lumenal side. Positions 70–332 (ISVQRLVVNY…TTNSIIGAGN (263 aa)) are confers specificity for binding DNF3. N78, N123, N187, N202, N213, N240, and N291 each carry an N-linked (GlcNAc...) asparagine glycan. 2 disulfides stabilise this stretch: C82–C126 and C179–C193. A helical membrane pass occupies residues 335–355 (LGIVYLIVAGIATLFAILFLI). At 356-393 (KVIFKPRPMHDHSYLNFENSDTPFDESSVVSIPLREIL) the chain is on the cytoplasmic side.

Belongs to the CDC50/LEM3 family. As to quaternary structure, component of a flippase complex consisting of DNF3 and YNR048W/CRF1. Interacts with DNF3; the interaction is direct and required for proper expression and endoplasmic reticulum (ER) export of either partner.

It is found in the golgi apparatus. It localises to the trans-Golgi network membrane. Accessory component of a P4-ATPase flippase complex which catalyzes the hydrolysis of ATP coupled to the transport of phosphatidylcholine and small amounts of phosphatidylethanolamine from the lumen to the cytosolic leaflet of the trans-Golgi network and ensures the maintenance of asymmetric distribution of phospholipids. May be involved in transport from early endosomes to the trans-Golgi network (TGN). The chain is Phospholipid-transporting ATPase accessory subunit CRF1 from Saccharomyces cerevisiae (strain ATCC 204508 / S288c) (Baker's yeast).